We begin with the raw amino-acid sequence, 368 residues long: Isocitrate dehydrogenase [NAD] regulatory subunit 3, mitochondrial (368 aa).

The transit peptide at 1–26 directs the protein to the mitochondrion; sequence MARRSVSIFNRLLANPPSPFTSLSRS.

This sequence belongs to the isocitrate and isopropylmalate dehydrogenases family. As to quaternary structure, heterooligomer of catalytic and regulatory subunits. Interacts with 14-3-3-like proteins GRF1 GRF3 and GRF8. Mainly expressed at a low level in pollen.

It localises to the mitochondrion. Functionally, performs an essential role in the oxidative function of the citric acid cycle. The chain is Isocitrate dehydrogenase [NAD] regulatory subunit 3, mitochondrial (IDH3) from Arabidopsis thaliana (Mouse-ear cress).